The sequence spans 21 residues: Cyanophlyctin (21 aa).

In terms of tissue distribution, expressed by the skin glands.

It localises to the secreted. Has antibacterial activity against E.coli HP101BA (MIC=6.4 uM), K.pneumoniae PTCC1388 (MIC=7.3 uM), M.luteus PTCC1625 (MIC=4.7 uM) and S.aureus PTCC1431 (MIC=5.3 uM). Has no or very limited (&lt;3%) hemolytic activity at concentrations of 15 ug/ml and 60 ug/ml, respectively. The protein is Cyanophlyctin of Euphlyctis cyanophlyctis (Skittering frog).